The primary structure comprises 310 residues: Glycerol-3-phosphate dehydrogenase [NAD(P)+] (310 aa).

The NADPH site is built by tryptophan 14, arginine 34, arginine 35, and lysine 82. Sn-glycerol 3-phosphate-binding residues include lysine 82 and glycine 110. Residue serine 114 coordinates NADPH. Residues lysine 165, aspartate 218, serine 228, arginine 229, and asparagine 230 each contribute to the sn-glycerol 3-phosphate site. The Proton acceptor role is filled by lysine 165. Position 229 (arginine 229) interacts with NADPH. Glutamate 255 is a binding site for NADPH.

Belongs to the NAD-dependent glycerol-3-phosphate dehydrogenase family.

The protein localises to the cytoplasm. It catalyses the reaction sn-glycerol 3-phosphate + NAD(+) = dihydroxyacetone phosphate + NADH + H(+). The enzyme catalyses sn-glycerol 3-phosphate + NADP(+) = dihydroxyacetone phosphate + NADPH + H(+). Its pathway is membrane lipid metabolism; glycerophospholipid metabolism. Functionally, catalyzes the reduction of the glycolytic intermediate dihydroxyacetone phosphate (DHAP) to sn-glycerol 3-phosphate (G3P), the key precursor for phospholipid synthesis. The chain is Glycerol-3-phosphate dehydrogenase [NAD(P)+] from Acaryochloris marina (strain MBIC 11017).